We begin with the raw amino-acid sequence, 311 residues long: MSAAPHISVLLDEVVEALDAKPGDVVVDGTFGAGGYTRAVLPTGASVVAFDRDPTVRQFAANLPADRFRLVQARFSEMLDELGPESVEGVMLDLGVSSMQLDQAERGFSFMRDGPLDMRMGDTGPTAADLVNTLDHAELAKILYVYGEEHASRRIASFILRRREERPFERTLDLAEVIERAVGGRKGAKVHPATRSFQGLRIAVNDELGELEAGLAAAERVLKPGGRLVVVTFHSLEDRIVKAFLAERAGKAPGGSRHAPPVAAGAAPSFQLISNKAIAPSEAELAVNPRARSSKLRAAVRTDAPVWEAAG.

Residues 34–36 (GGY), Asp-51, Phe-75, Asp-93, and Gln-100 each bind S-adenosyl-L-methionine.

Belongs to the methyltransferase superfamily. RsmH family.

Its subcellular location is the cytoplasm. It carries out the reaction cytidine(1402) in 16S rRNA + S-adenosyl-L-methionine = N(4)-methylcytidine(1402) in 16S rRNA + S-adenosyl-L-homocysteine + H(+). Specifically methylates the N4 position of cytidine in position 1402 (C1402) of 16S rRNA. In Caulobacter vibrioides (strain ATCC 19089 / CIP 103742 / CB 15) (Caulobacter crescentus), this protein is Ribosomal RNA small subunit methyltransferase H.